Consider the following 161-residue polypeptide: Nucleoside diphosphate kinase (161 aa).

ATP-binding residues include Lys-12, Phe-60, Arg-88, Thr-94, and Arg-105. The active-site Pros-phosphohistidine intermediate is His-121.

Belongs to the NDK family. It depends on Mg(2+) as a cofactor.

It is found in the cytoplasm. The enzyme catalyses a 2'-deoxyribonucleoside 5'-diphosphate + ATP = a 2'-deoxyribonucleoside 5'-triphosphate + ADP. The catalysed reaction is a ribonucleoside 5'-diphosphate + ATP = a ribonucleoside 5'-triphosphate + ADP. Functionally, major role in the synthesis of nucleoside triphosphates other than ATP. The ATP gamma phosphate is transferred to the NDP beta phosphate via a ping-pong mechanism, using a phosphorylated active-site intermediate. The protein is Nucleoside diphosphate kinase of Pyrococcus furiosus (strain ATCC 43587 / DSM 3638 / JCM 8422 / Vc1).